We begin with the raw amino-acid sequence, 302 residues long: Urease accessory protein UreD 2 (302 aa).

Belongs to the UreD family. In terms of assembly, ureD, UreF and UreG form a complex that acts as a GTP-hydrolysis-dependent molecular chaperone, activating the urease apoprotein by helping to assemble the nickel containing metallocenter of UreC. The UreE protein probably delivers the nickel.

The protein localises to the cytoplasm. In terms of biological role, required for maturation of urease via the functional incorporation of the urease nickel metallocenter. The protein is Urease accessory protein UreD 2 of Brucella melitensis biotype 1 (strain ATCC 23456 / CCUG 17765 / NCTC 10094 / 16M).